A 238-amino-acid polypeptide reads, in one-letter code: Ankyrin repeat domain-containing protein 49 (238 aa).

The segment at 38–57 is disordered; sequence TGTQSLWVGNSDEDEEQEEK. Phosphoserine is present on Ser-48. A compositionally biased stretch (acidic residues) spans 48-57; that stretch reads SDEDEEQEEK. 4 ANK repeats span residues 72–105, 106–135, 139–168, and 172–205; these read DPSK…TRDE, DEYT…DVHA, DGWT…DINA, and GLLT…ELKN.

In terms of tissue distribution, expressed in spermatogonia, spermatocytes and round spermatids.

The protein localises to the nucleus. Its function is as follows. May have a role in spermatogenesis where it promotes autophagy in response to serum starvation, via the NF-kappaB pathway. This chain is Ankyrin repeat domain-containing protein 49 (Ankrd49), found in Mus musculus (Mouse).